The chain runs to 1505 residues: Anaphase-promoting complex subunit 1 (1505 aa).

This sequence belongs to the APC1 family. In terms of assembly, the APC/C complex is probably composed of at least 12 subunits: apc-2, apc-10, apc-11, cdc-26, emb-1, emb-27, emb-30, mat-1, mat-2, mat-3, such-1 and gfi-3.

It participates in protein modification; protein ubiquitination. Functionally, probable component of the anaphase promoting complex/cyclosome (APC/C), a cell cycle-regulated E3 ubiquitin ligase that controls progression through mitosis and the G1 phase of the cell cycle. The APC/C complex acts by mediating ubiquitination and subsequent degradation of target proteins. Developmental role in early embryogenesis and the metaphase to anaphase transition in oocyte and spermatocyte meiosis and mitosis in germ cells. Required for embryonic anterior-posterior axis formation. Plays a role in regulating the abundance of glr-1 receptors in postmitotic neurons, which may in turn control animal locomotion. Involved in regulating GABA neurotransmitter release at neuromuscular junctions in GABA motor neurons. The polypeptide is Anaphase-promoting complex subunit 1 (Caenorhabditis elegans).